A 133-amino-acid polypeptide reads, in one-letter code: Ribosome-binding factor A (133 aa).

It belongs to the RbfA family. Monomer. Binds 30S ribosomal subunits, but not 50S ribosomal subunits or 70S ribosomes.

It localises to the cytoplasm. Its function is as follows. One of several proteins that assist in the late maturation steps of the functional core of the 30S ribosomal subunit. Associates with free 30S ribosomal subunits (but not with 30S subunits that are part of 70S ribosomes or polysomes). Required for efficient processing of 16S rRNA. May interact with the 5'-terminal helix region of 16S rRNA. The protein is Ribosome-binding factor A of Nostoc sp. (strain PCC 7120 / SAG 25.82 / UTEX 2576).